Reading from the N-terminus, the 401-residue chain is Phosphoglycerate kinase, cytosolic (401 aa).

The (2R)-3-phosphoglycerate site is built by A24, D25, N27, R41, S63, H64, G66, R67, R122, H154, and R155. G200 serves as a coordination point for ADP. CDP is bound at residue G200. AMP contacts are provided by K202 and K206. K206 contributes to the ATP binding site. ADP is bound at residue G224. G224 is a CDP binding site. AMP-binding residues include G225 and G297. G225 and G297 together coordinate ATP. Residues G322 and F327 each contribute to the CDP site. F327 contacts ADP. Position 328 (E328) interacts with AMP. E328, D359, and S360 together coordinate ATP. D359 serves as a coordination point for Mg(2+).

This sequence belongs to the phosphoglycerate kinase family. Monomer. It depends on Mg(2+) as a cofactor.

The protein localises to the cytoplasm. It carries out the reaction (2R)-3-phosphoglycerate + ATP = (2R)-3-phospho-glyceroyl phosphate + ADP. The protein operates within carbohydrate degradation; glycolysis; pyruvate from D-glyceraldehyde 3-phosphate: step 2/5. The chain is Phosphoglycerate kinase, cytosolic from Triticum aestivum (Wheat).